Consider the following 194-residue polypeptide: Probable GTP-binding protein EngB (194 aa).

Residues 22–194 (DLPEYALAGR…AWQFIKEGME (173 aa)) enclose the EngB-type G domain. GTP is bound by residues 30–37 (GRSNVGKS), 57–61 (GKTQT), 75–78 (DVPG), 142–145 (TKAD), and 174–176 (FSS). Mg(2+) contacts are provided by serine 37 and threonine 59.

It belongs to the TRAFAC class TrmE-Era-EngA-EngB-Septin-like GTPase superfamily. EngB GTPase family. Mg(2+) serves as cofactor.

Necessary for normal cell division and for the maintenance of normal septation. The sequence is that of Probable GTP-binding protein EngB from Listeria innocua serovar 6a (strain ATCC BAA-680 / CLIP 11262).